The chain runs to 354 residues: Protein OPG055 (354 aa).

This sequence belongs to the orthopoxvirus OPG055 family.

Its function is as follows. Stimulates increases in peripheral microtubule dynamics and may increase the motility of the infected cells, contributing to cell-to-cell spread of the virus. Seems to inhibit the signaling via the GTPase RHOA and DIAPH1/mDia. The sequence is that of Protein OPG055 (OPG055) from Cynomys gunnisoni (Gunnison's prairie dog).